The sequence spans 128 residues: Large ribosomal subunit protein uL24 (128 aa).

This sequence belongs to the universal ribosomal protein uL24 family. In terms of assembly, part of the 50S ribosomal subunit.

Its function is as follows. One of two assembly initiator proteins, it binds directly to the 5'-end of the 23S rRNA, where it nucleates assembly of the 50S subunit. In terms of biological role, located at the polypeptide exit tunnel on the outside of the subunit. In Pyrobaculum calidifontis (strain DSM 21063 / JCM 11548 / VA1), this protein is Large ribosomal subunit protein uL24.